The chain runs to 452 residues: tRNA modification GTPase MnmE (452 aa).

Residues Arg21, Glu78, and Lys118 each contribute to the (6S)-5-formyl-5,6,7,8-tetrahydrofolate site. The 162-residue stretch at 214–375 (GMKVVIAGRP…LREHLKQSMG (162 aa)) folds into the TrmE-type G domain. Asn224 contributes to the K(+) binding site. Residues 224 to 229 (NAGKSS), 243 to 249 (TDIAGTT), 268 to 271 (DTAG), and 333 to 336 (NKAD) each bind GTP. Position 228 (Ser228) interacts with Mg(2+). K(+) contacts are provided by Thr243, Ile245, and Thr248. Thr249 serves as a coordination point for Mg(2+). Lys452 provides a ligand contact to (6S)-5-formyl-5,6,7,8-tetrahydrofolate.

Belongs to the TRAFAC class TrmE-Era-EngA-EngB-Septin-like GTPase superfamily. TrmE GTPase family. In terms of assembly, homodimer. Heterotetramer of two MnmE and two MnmG subunits. K(+) serves as cofactor.

It is found in the cytoplasm. Exhibits a very high intrinsic GTPase hydrolysis rate. Involved in the addition of a carboxymethylaminomethyl (cmnm) group at the wobble position (U34) of certain tRNAs, forming tRNA-cmnm(5)s(2)U34. This Pasteurella multocida (strain Pm70) protein is tRNA modification GTPase MnmE.